The chain runs to 223 residues: UPF0441 protein YgiB (223 aa).

The segment covering 178–195 has biased composition (low complexity); the sequence is TVPKTAMAPKPATTTTVT. Residues 178–223 are disordered; the sequence is TVPKTAMAPKPATTTTVTRGGFGESVAKQSTMQRSATGTSSRSMGG. The span at 204-223 shows a compositional bias: polar residues; the sequence is AKQSTMQRSATGTSSRSMGG.

This sequence belongs to the UPF0441 family.

This chain is UPF0441 protein YgiB, found in Shigella boydii serotype 18 (strain CDC 3083-94 / BS512).